Consider the following 149-residue polypeptide: Calmodulin (149 aa).

N-acetylalanine is present on alanine 2. 4 consecutive EF-hand domains span residues 8 to 43 (EQIA…LGQN), 44 to 79 (PTEA…KMKD), 81 to 116 (DSEE…LGEK), and 117 to 149 (LTDE…MTAK). Positions 21, 23, 25, 27, 32, 59, 61, 63, 68, 94, 96, 98, 100, and 105 each coordinate Ca(2+). The residue at position 116 (lysine 116) is an N6,N6,N6-trimethyllysine. Positions 130, 132, 134, 136, and 141 each coordinate Ca(2+).

It belongs to the calmodulin family.

Calmodulin acts as part of a calcium signal transduction pathway by mediating the control of a large number of enzymes, ion channels, aquaporins and other proteins through calcium-binding. Calcium-binding is required for the activation of calmodulin. Among the enzymes to be stimulated by the calmodulin-calcium complex are a number of protein kinases, such as myosin light-chain kinases and calmodulin-dependent protein kinase type II (CaMK2), and phosphatases. This Myxine glutinosa (Atlantic hagfish) protein is Calmodulin.